The following is an 84-amino-acid chain: Cytochrome b559 subunit alpha (84 aa).

The chain crosses the membrane as a helical span at residues 22-36 (VIHSITIPALFVAGW). H24 is a heme binding site.

It belongs to the PsbE/PsbF family. As to quaternary structure, heterodimer of an alpha subunit and a beta subunit. PSII is composed of 1 copy each of membrane proteins PsbA, PsbB, PsbC, PsbD, PsbE, PsbF, PsbH, PsbI, PsbJ, PsbK, PsbL, PsbM, PsbT, PsbX, PsbY, PsbZ, Psb30/Ycf12, at least 3 peripheral proteins of the oxygen-evolving complex and a large number of cofactors. It forms dimeric complexes. The cofactor is heme b.

The protein localises to the plastid. The protein resides in the chloroplast thylakoid membrane. Its function is as follows. This b-type cytochrome is tightly associated with the reaction center of photosystem II (PSII). PSII is a light-driven water:plastoquinone oxidoreductase that uses light energy to abstract electrons from H(2)O, generating O(2) and a proton gradient subsequently used for ATP formation. It consists of a core antenna complex that captures photons, and an electron transfer chain that converts photonic excitation into a charge separation. The chain is Cytochrome b559 subunit alpha from Porphyra purpurea (Red seaweed).